A 336-amino-acid polypeptide reads, in one-letter code: Uroporphyrinogen decarboxylase (336 aa).

Substrate is bound by residues 24 to 28 (RQVGR), aspartate 73, tyrosine 142, serine 197, and histidine 312.

Belongs to the uroporphyrinogen decarboxylase family. Homodimer.

Its subcellular location is the cytoplasm. It catalyses the reaction uroporphyrinogen III + 4 H(+) = coproporphyrinogen III + 4 CO2. Its pathway is porphyrin-containing compound metabolism; protoporphyrin-IX biosynthesis; coproporphyrinogen-III from 5-aminolevulinate: step 4/4. In terms of biological role, catalyzes the decarboxylation of four acetate groups of uroporphyrinogen-III to yield coproporphyrinogen-III. In Chlamydia trachomatis serovar L2 (strain ATCC VR-902B / DSM 19102 / 434/Bu), this protein is Uroporphyrinogen decarboxylase.